The primary structure comprises 117 residues: DNA-directed RNA polymerase subunit omega (117 aa).

The protein belongs to the RNA polymerase subunit omega family. The RNAP catalytic core consists of 2 alpha, 1 beta, 1 beta' and 1 omega subunit. When a sigma factor is associated with the core the holoenzyme is formed, which can initiate transcription.

The enzyme catalyses RNA(n) + a ribonucleoside 5'-triphosphate = RNA(n+1) + diphosphate. Functionally, promotes RNA polymerase assembly. Latches the N- and C-terminal regions of the beta' subunit thereby facilitating its interaction with the beta and alpha subunits. In Jannaschia sp. (strain CCS1), this protein is DNA-directed RNA polymerase subunit omega.